Consider the following 124-residue polypeptide: Fluoride-specific ion channel FluC 2 (124 aa).

The next 4 membrane-spanning stretches (helical) occupy residues 8-28 (LPNQ…GALV), 34-54 (NDLL…GLPF), 60-80 (LLLG…MVEC), and 93-113 (LGLI…GFLI). Na(+) contacts are provided by G68 and T71.

This sequence belongs to the fluoride channel Fluc/FEX (TC 1.A.43) family.

It localises to the cell inner membrane. It carries out the reaction fluoride(in) = fluoride(out). With respect to regulation, na(+) is not transported, but it plays an essential structural role and its presence is essential for fluoride channel function. Fluoride-specific ion channel. Important for reducing fluoride concentration in the cell, thus reducing its toxicity. This Prochlorococcus marinus (strain MIT 9313) protein is Fluoride-specific ion channel FluC 2.